The primary structure comprises 212 residues: uncharacterized protein (212 aa).

The SIS domain maps to 46–198 (LERVYREKRK…IYSLMTRLGI (153 aa)).

Belongs to the SIS family. PHI subfamily.

This is an uncharacterized protein from Aeropyrum pernix (strain ATCC 700893 / DSM 11879 / JCM 9820 / NBRC 100138 / K1).